Reading from the N-terminus, the 268-residue chain is Tetratricopeptide repeat protein 33 (268 aa).

Positions 14-34 (VSKQTVQQFEQDSEQADEDEV) are disordered. A compositionally biased stretch (acidic residues) spans 24-34 (QDSEQADEDEV). TPR repeat units follow at residues 60 to 93 (SKRL…TPED), 94 to 127 (AVLY…RPIW), and 128 to 161 (WEAW…HPSE). The disordered stretch occupies residues 249–268 (EGDDNPTSSSQSVLIKARGL).

The protein is Tetratricopeptide repeat protein 33 (ttc33) of Danio rerio (Zebrafish).